Reading from the N-terminus, the 463-residue chain is Cysteine--tRNA ligase (463 aa).

Cysteine 27 serves as a coordination point for Zn(2+). Residues methionine 29 to histidine 39 carry the 'HIGH' region motif. The Zn(2+) site is built by cysteine 208, histidine 233, and glutamate 237. A 'KMSKS' region motif is present at residues lysine 265–serine 269. Lysine 268 is a binding site for ATP.

Belongs to the class-I aminoacyl-tRNA synthetase family. In terms of assembly, monomer. The cofactor is Zn(2+).

It localises to the cytoplasm. It carries out the reaction tRNA(Cys) + L-cysteine + ATP = L-cysteinyl-tRNA(Cys) + AMP + diphosphate. This chain is Cysteine--tRNA ligase, found in Marinobacter nauticus (strain ATCC 700491 / DSM 11845 / VT8) (Marinobacter aquaeolei).